A 224-amino-acid chain; its full sequence is UPF0758 protein ABO_0214 (224 aa).

An MPN domain is found at 102–224 (PLDNPDKAGQ…WVSLASRGAV (123 aa)). Zn(2+)-binding residues include H173, H175, and D186. The short motif at 173–186 (HNHPSGVAEPSQSD) is the JAMM motif element.

It belongs to the UPF0758 family.

The chain is UPF0758 protein ABO_0214 from Alcanivorax borkumensis (strain ATCC 700651 / DSM 11573 / NCIMB 13689 / SK2).